A 315-amino-acid chain; its full sequence is B3 domain-containing protein At1g05920 (315 aa).

The disordered stretch occupies residues methionine 24–valine 129. Composition is skewed to basic and acidic residues over residues valine 39–isoleucine 51, lysine 66–threonine 83, and phenylalanine 100–leucine 114. Positions isoleucine 204–threonine 306 form a DNA-binding region, TF-B3.

It is found in the nucleus. The sequence is that of B3 domain-containing protein At1g05920 from Arabidopsis thaliana (Mouse-ear cress).